Consider the following 189-residue polypeptide: 3-isopropylmalate dehydratase small subunit (189 aa).

The protein belongs to the LeuD family. LeuD type 1 subfamily. Heterodimer of LeuC and LeuD.

It carries out the reaction (2R,3S)-3-isopropylmalate = (2S)-2-isopropylmalate. It participates in amino-acid biosynthesis; L-leucine biosynthesis; L-leucine from 3-methyl-2-oxobutanoate: step 2/4. Functionally, catalyzes the isomerization between 2-isopropylmalate and 3-isopropylmalate, via the formation of 2-isopropylmaleate. The chain is 3-isopropylmalate dehydratase small subunit from Francisella tularensis subsp. holarctica (strain FTNF002-00 / FTA).